A 429-amino-acid polypeptide reads, in one-letter code: Glutamyl-tRNA reductase (429 aa).

Substrate contacts are provided by residues 56–59, Ser-119, 124–126, and Gln-130; these read TCNR and EPQ. Catalysis depends on Cys-57, which acts as the Nucleophile. 199–204 provides a ligand contact to NADP(+); the sequence is GAGEMI.

This sequence belongs to the glutamyl-tRNA reductase family. Homodimer.

The enzyme catalyses (S)-4-amino-5-oxopentanoate + tRNA(Glu) + NADP(+) = L-glutamyl-tRNA(Glu) + NADPH + H(+). The protein operates within porphyrin-containing compound metabolism; protoporphyrin-IX biosynthesis; 5-aminolevulinate from L-glutamyl-tRNA(Glu): step 1/2. Its function is as follows. Catalyzes the NADPH-dependent reduction of glutamyl-tRNA(Glu) to glutamate 1-semialdehyde (GSA). The polypeptide is Glutamyl-tRNA reductase (Herminiimonas arsenicoxydans).